The primary structure comprises 550 residues: Methionine--tRNA ligase (550 aa).

The short motif at 13 to 23 is the 'HIGH' region element; sequence PYANGPLHFGH. Residues C145, C148, C158, and C161 each contribute to the Zn(2+) site. Positions 331 to 335 match the 'KMSKS' region motif; sequence QFSKS. Residue K334 coordinates ATP.

The protein belongs to the class-I aminoacyl-tRNA synthetase family. MetG type 1 subfamily. Monomer. The cofactor is Zn(2+).

The protein resides in the cytoplasm. The enzyme catalyses tRNA(Met) + L-methionine + ATP = L-methionyl-tRNA(Met) + AMP + diphosphate. Its function is as follows. Is required not only for elongation of protein synthesis but also for the initiation of all mRNA translation through initiator tRNA(fMet) aminoacylation. The polypeptide is Methionine--tRNA ligase (metG) (Chlamydia muridarum (strain MoPn / Nigg)).